We begin with the raw amino-acid sequence, 594 residues long: DELLA protein 1 (594 aa).

A disordered region spans residues 1–36; that stretch reads MKREHQESFGGGVISNNNKTNTNHLNSSKNINFGEC. A compositionally biased stretch (low complexity) spans 15–30; that stretch reads SNNNKTNTNHLNSSKN. The DELLA motif motif lies at 61–65; that stretch reads DELLA. Residues 207–587 enclose the GRAS domain; that stretch reads VDTQETGVRL…RSLIATSAWK (381 aa). The segment at 214–268 is leucine repeat I (LRI); it reads VRLVHTLMACAEAIQQKNLKLAEALVKHISLLASLQTGAMRKVASYFAQALARRI. The segment at 216-253 is required for possible homodimerization; it reads LVHTLMACAEAIQQKNLKLAEALVKHISLLASLQTGAM. The LxCxE motif; degenerate motif lies at 221 to 225; the sequence is MACAE. Residues 285 to 350 are VHIID; it reads HMHFYESSPY…GGPPTFRLTG (66 aa). Positions 316–320 match the VHIID motif; that stretch reads VHVID. The segment at 364-396 is leucine repeat II (LRII); it reads QVGWKLAQLAQTIGVQFEFRGFVCNSIADLDPN. The tract at residues 406-508 is PFYRE; sequence VAVNSVFELH…EIYLGKQICN (103 aa). An LXXLL motif; degenerate motif is present at residues 414–418; it reads LHTML. The SAW stretch occupies residues 511–587; it reads AYEGVDRVER…RSLIATSAWK (77 aa).

Belongs to the GRAS family. DELLA subfamily. As to quaternary structure, may be a homodimer. Ubiquitinated. Upon GA application it is ubiquitinated, leading to its subsequent degradation. Strongly expressed in the vascular tissue and endodermis but barely in the inner cortical cells where arbuscule are formed during arbuscular mycorrhizal (AM) symbiosis.

Its subcellular location is the nucleus. Its function is as follows. Probable transcriptional regulator that acts as a repressor of the gibberellin (GA) signaling pathway. Probably acts by participating in large multiprotein complexes that repress transcription of GA-inducible genes. Upon GA application, it is degraded by the proteasome, allowing the GA signaling pathway. Together with DELLA2, required to enable arbuscule development during arbuscular mycorrhizal (AM) symbiosis with AM fungi (e.g. Glomus versiforme) via the regulation of RAM1 which, in turn, regulates various AM genes (e.g. NSP1, NSP2, PT4, LEC5, RAM2, EXO70I, STR and RAD1). This is DELLA protein 1 from Medicago truncatula (Barrel medic).